Here is a 71-residue protein sequence, read N- to C-terminus: MHIVVCIKQFPGFGRLVSSSSGRRQLTATQPRSDPESQRGRTSSNRLTWRGALEWPRAASALDLGIFPSRR.

Polar residues predominate over residues Ser-20 to Arg-32. The segment at Ser-20 to Arg-46 is disordered.

This is an uncharacterized protein from Rhizobium leguminosarum.